Consider the following 386-residue polypeptide: Succinate--CoA ligase [ADP-forming] subunit beta (386 aa).

The ATP-grasp domain occupies 9–237 (KEVLRDFGVN…LSAEHPLEVE (229 aa)). ATP contacts are provided by residues lysine 45, 52-54 (GRG), valine 94, and glutamate 101. 2 residues coordinate Mg(2+): asparagine 192 and aspartate 206. Substrate-binding positions include asparagine 258 and 315-317 (GIT).

Belongs to the succinate/malate CoA ligase beta subunit family. Heterotetramer of two alpha and two beta subunits. Mg(2+) serves as cofactor.

The enzyme catalyses succinate + ATP + CoA = succinyl-CoA + ADP + phosphate. The catalysed reaction is GTP + succinate + CoA = succinyl-CoA + GDP + phosphate. Its pathway is carbohydrate metabolism; tricarboxylic acid cycle; succinate from succinyl-CoA (ligase route): step 1/1. Functionally, succinyl-CoA synthetase functions in the citric acid cycle (TCA), coupling the hydrolysis of succinyl-CoA to the synthesis of either ATP or GTP and thus represents the only step of substrate-level phosphorylation in the TCA. The beta subunit provides nucleotide specificity of the enzyme and binds the substrate succinate, while the binding sites for coenzyme A and phosphate are found in the alpha subunit. This Deinococcus radiodurans (strain ATCC 13939 / DSM 20539 / JCM 16871 / CCUG 27074 / LMG 4051 / NBRC 15346 / NCIMB 9279 / VKM B-1422 / R1) protein is Succinate--CoA ligase [ADP-forming] subunit beta.